The following is a 317-amino-acid chain: Acetyl-coenzyme A carboxylase carboxyl transferase subunit alpha (317 aa).

Residues 39–293 (RLETKAREAL…GDAIADALSQ (255 aa)) enclose the CoA carboxyltransferase C-terminal domain.

It belongs to the AccA family. As to quaternary structure, acetyl-CoA carboxylase is a heterohexamer composed of biotin carboxyl carrier protein (AccB), biotin carboxylase (AccC) and two subunits each of ACCase subunit alpha (AccA) and ACCase subunit beta (AccD).

It is found in the cytoplasm. It carries out the reaction N(6)-carboxybiotinyl-L-lysyl-[protein] + acetyl-CoA = N(6)-biotinyl-L-lysyl-[protein] + malonyl-CoA. It participates in lipid metabolism; malonyl-CoA biosynthesis; malonyl-CoA from acetyl-CoA: step 1/1. Component of the acetyl coenzyme A carboxylase (ACC) complex. First, biotin carboxylase catalyzes the carboxylation of biotin on its carrier protein (BCCP) and then the CO(2) group is transferred by the carboxyltransferase to acetyl-CoA to form malonyl-CoA. The polypeptide is Acetyl-coenzyme A carboxylase carboxyl transferase subunit alpha (Xanthobacter autotrophicus (strain ATCC BAA-1158 / Py2)).